The following is a 661-amino-acid chain: MDMKHSRLFSPLQIGSLTLSNRVGMAPMSMDYEAADGTVPKRLADVFVRRAEGGTGYVMIDAVTIDSKYPYMGNTTALDRDELVPQFKEFADRVKEAGSTLVPQIIHPGPESVCGYRHIAPLGPSANTNANCHVSRSISIDEIHDIIKQFGQAARRAEEAGCGAISLHCAHAYMLPGSFLSPLRNKRMDEYGGSLDNRARFVIEMIEEARRNVSPDFPIFLRISGDERMVGGNSLEDMLYLAPKFEAAGVSMLEVSGGTQYEGLEHIIPCQNKSRGVNVYEASEIKKVVGIPVYAVGKINDIRYAAEIVERGLVDGVAMGRPLLADPDLCKKAVEGQFDEITPCASCGGSCISRSEAAPECHCHINPRLGREYEFPDVPAEKSKKVLVIGAGPGGMMAAVTAAERGHDVTVWEADDKIGGQLNLAVVAPGKQEMTQWMVHLNYRAKKAGVKFEFNKEATAEDVKALAPEAVIVATGAKPLVPPIKGTQDYPVLTAHDFLRGKFVIPKGRVCVLGGGAVACETAETALENARPNSYTRGYDASIGDIDVTLVEMLPQLLTGVCAPNREPLIRKLKSKGVHINVNTKIMEVTDHEVKVQRQDGTQEWLEGFDYVLFGLGSRNYDPLSETLKEFVPEVHVIGDAVRARQASYAMWEGFEKAYSL.

Gln-104 serves as a coordination point for FMN. 168–171 (HCAH) is a substrate binding site. The Proton donor role is filled by Tyr-173. Residues Arg-222, Lys-298, and 320 to 321 (GR) each bind FMN. The [4Fe-4S] cluster site is built by Cys-344, Cys-347, Cys-351, and Cys-363. Gly-394, Glu-413, Gln-421, Lys-431, and Ala-458 together coordinate FAD.

The protein in the N-terminal section; belongs to the NADH:flavin oxidoreductase/NADH oxidase family. Homotrimer. Requires FMN as cofactor. FAD serves as cofactor. The cofactor is [4Fe-4S] cluster.

It catalyses the reaction 7beta-hydroxy-3-oxochol-24-oyl-CoA + NAD(+) = 7beta-hydroxy-3-oxochol-4-en-24-oyl-CoA + NADH + H(+). It functions in the pathway lipid metabolism; bile acid degradation. Activity is inhibited by sulfhydryl-reactive compounds, acriflavine, o-phenanthroline and EDTA. NADH-dependent flavin oxidoreductase. Stereo-specific NAD(H)-dependent 3-oxo-delta4-cholenoic acid oxidoreductase involved in bile acid 7beta-dehydroxylation. The chain is 7-beta-hydroxy-3-oxochol-24-oyl-CoA 4-desaturase from Clostridium scindens (strain JCM 10418 / VPI 12708).